Consider the following 122-residue polypeptide: Large ribosomal subunit protein uL14 (122 aa).

This sequence belongs to the universal ribosomal protein uL14 family. Part of the 50S ribosomal subunit. Forms a cluster with proteins L3 and L19. In the 70S ribosome, L14 and L19 interact and together make contacts with the 16S rRNA in bridges B5 and B8.

Its function is as follows. Binds to 23S rRNA. Forms part of two intersubunit bridges in the 70S ribosome. The protein is Large ribosomal subunit protein uL14 of Ectopseudomonas mendocina (strain ymp) (Pseudomonas mendocina).